Here is a 549-residue protein sequence, read N- to C-terminus: Probable glucomannan 4-beta-mannosyltransferase 4 (549 aa).

Residues 35–55 (VAPVLQFAVWACMAMSVMLVL) form a helical membrane-spanning segment. The active site involves Asp151. Substrate is bound by residues Asp210 and Asp212. Asp304 is an active-site residue. The next 4 helical transmembrane spans lie at 383 to 403 (VVAPILTFLFYCVVIPLSVMV), 406 to 426 (VSIPVWGMVYIPTAITIMNAI), 497 to 517 (IYIPELMVAFYLLVCASYDLV), and 523 to 543 (YYLYIYLQAFAFIALGFGFAG).

The protein belongs to the glycosyltransferase 2 family. Plant cellulose synthase-like A subfamily.

Its subcellular location is the golgi apparatus membrane. The catalysed reaction is GDP-mannose + (glucomannan)n = GDP + (glucomannan)n+1.. Its function is as follows. Probable mannan synthase which consists of a 4-beta-mannosyltransferase activity on mannan using GDP-mannose. The beta-1,4-mannan product is the backbone for galactomannan synthesis by galactomannan galactosyltransferase. Galactomannan is a noncellulosic polysaccharides of plant cell wall. The chain is Probable glucomannan 4-beta-mannosyltransferase 4 from Oryza sativa subsp. japonica (Rice).